Reading from the N-terminus, the 405-residue chain is Putative colanic acid polymerase (405 aa).

11 helical membrane passes run 5–25 (IRIC…VKIA), 27–47 (LGES…LLFL), 55–75 (LMIA…FGQS), 81–101 (YVTS…VWSI), 117–137 (FFYL…AQII), 171–191 (TALY…WLSI), 204–224 (MILA…FILF), 244–264 (PLAL…FPYI), 282–302 (IVGP…VVRF), 327–347 (GLYL…LWYM), and 376–396 (LFFT…CPFI).

It is found in the cell inner membrane. Its pathway is slime biogenesis; slime polysaccharide biosynthesis. This is Putative colanic acid polymerase (wcaD) from Escherichia coli (strain K12).